The chain runs to 245 residues: Terpene cyclase prhH (245 aa).

Transmembrane regions (helical) follow at residues 17 to 37 (ILAISEVLKVVAAVGWSVNYI), 51 to 71 (IGILPLCCDIGWEFVYAWMFP), 76 to 96 (HWQGVVRVWFFLHSAVLLVTL), 113 to 133 (IVFIYIFVTLVFGAGQYALAA), 138 to 158 (ALGFHWGGALCQFLSSSCGIA), 170 to 190 (SYLIWFARAISTFAGFIKLCI), and 205 to 225 (PMCWFYIVTVLSFDAAYPFLY).

The protein belongs to the paxB family.

The protein resides in the membrane. Its pathway is secondary metabolite biosynthesis; terpenoid biosynthesis. Its function is as follows. Terpene cyclase; part of the gene cluster that mediates the biosynthesis of paraherquonin, a meroterpenoid with a unique, highly congested hexacyclic molecular architecture. The first step of the pathway is the synthesis of 3,5-dimethylorsellinic acid (DMOA) by the polyketide synthase prhL. Synthesis of DMOA is followed by farnesylation by the prenyltransferase prhE, methylesterification by the methyl-transferase prhM, epoxidation of the prenyl chain by the flavin-dependent monooxygenase prhF, and cyclization of the farnesyl moiety by the terpene cyclase prhH, to yield the tetracyclic intermediate, protoaustinoid A. The short chain dehydrogenase prhI then oxidizes the C-3 alcohol group of the terpene cyclase product to transform protoaustinoid A into protoaustinoid B. The FAD-binding monooxygenase prhJ catalyzes the oxidation of protoaustinoid B into preaustinoid A which is further oxidized into preaustinoid A1 by FAD-binding monooxygenase phrK. Finally, prhA leads to berkeleydione via the berkeleyone B intermediate. PrhA is a multifunctional dioxygenase that first desaturates at C5-C6 to form berkeleyone B, followed by rearrangement of the A/B-ring to form the cycloheptadiene moiety in berkeleydione. Berkeleydione serves as the key intermediate for the biosynthesis of paraherquonin as well as many other meroterpenoids. The cytochrome P450 monooxygenases prhB, prhD, and prhN, as well as the isomerase prhC, are probably involved in the late stage of paraherquonin biosynthesis, after the production of berkeleydione. Especially prhC might be a multifunctional enzyme that catalyzes the D-ring expansion via intramolecular methoxy rearrangement, as well as the hydrolysis of the expanded D-ring. This chain is Terpene cyclase prhH, found in Penicillium brasilianum.